A 55-amino-acid polypeptide reads, in one-letter code: Conotoxin Cal22b (55 aa).

A propeptide spanning residues 1-5 (GRPSA) is cleaved from the precursor.

Contains 4 disulfide bonds. Expressed by the venom duct.

The protein localises to the secreted. In terms of biological role, probable neurotoxin with unknown target. Possibly targets ion channels. The polypeptide is Conotoxin Cal22b (Californiconus californicus (California cone)).